A 442-amino-acid chain; its full sequence is G-protein coupled receptor family C group 5 member C (442 aa).

Positions 1-23 (MAIHRTVLMCLGLPLFLLPGARA) are cleaved as a signal peptide. The Extracellular segment spans residues 24–50 (QEQAPPGCSPDLNPLYYNLCDRSEAWG). Residues 51 to 71 (IILEAVAGAGVVTTFVLTIIL) traverse the membrane as a helical segment. Topologically, residues 72–85 (VASLPFVQDTKKRS) are cytoplasmic. The chain crosses the membrane as a helical span at residues 86–106 (LLGTQVFFLLGTLGLFCLVFA). Over 107–120 (CVVKPSFSTCASRR) the chain is Extracellular. A helical membrane pass occupies residues 121–141 (FLFGVLFAICFSCLVAHVLAL). Over 142-155 (HFLVRKNHGPRGWV) the chain is Cytoplasmic. The chain crosses the membrane as a helical span at residues 156–176 (IFLVALLLSLVEVIINTEWLI). The Extracellular portion of the chain corresponds to 177–209 (ITLVRGAGTEGDALGNGSAGWVAVSPCAIANAD). Asn192 carries an N-linked (GlcNAc...) asparagine glycan. A helical membrane pass occupies residues 210-230 (FVMALIYVMLLLLCAFSGAWS). Residues 231 to 242 (ALCGRFKRWRKH) are Cytoplasmic-facing. Residues 243-263 (GVFILLTTTASIAVWVVWIVM) traverse the membrane as a helical segment. Residues 264–280 (YTYGNRQHNSPTWDDPT) are Extracellular-facing. The chain crosses the membrane as a helical span at residues 281-301 (LAIALATNAWAFVLFYVIPEV). At 302 to 442 (SQVTRSSPEQ…QVFRNPYVWD (141 aa)) the chain is on the cytoplasmic side. Phosphoserine is present on residues Ser345, Ser384, Ser404, and Ser407. At Tyr415 the chain carries Phosphotyrosine. Thr424 is subject to Phosphothreonine.

The protein belongs to the G-protein coupled receptor 3 family.

It localises to the cell membrane. Functionally, this retinoic acid-inducible G-protein coupled receptor provide evidence for a possible interaction between retinoid and G-protein signaling pathways. The protein is G-protein coupled receptor family C group 5 member C (GPRC5C) of Bos taurus (Bovine).